A 219-amino-acid chain; its full sequence is Uracil phosphoribosyltransferase 1 (219 aa).

Residues R33, R42, and 76-79 (DGRI) each bind GTP. R86 provides a ligand contact to 5-phospho-alpha-D-ribose 1-diphosphate. Residue R103 participates in GTP binding. R111 is a 5-phospho-alpha-D-ribose 1-diphosphate binding site. Position 132 (R132) interacts with GTP. 5-phospho-alpha-D-ribose 1-diphosphate-binding positions include D138 and 138-146 (DPMLATGGS). Y202 contributes to the D-ribose 5-phosphate binding site. Residues I203 and 208 to 210 (GDF) contribute to the uracil site. D209 is a 5-phospho-alpha-D-ribose 1-diphosphate binding site.

It belongs to the UPRTase family. Requires Mg(2+) as cofactor.

It carries out the reaction UMP + diphosphate = 5-phospho-alpha-D-ribose 1-diphosphate + uracil. It functions in the pathway pyrimidine metabolism; UMP biosynthesis via salvage pathway; UMP from uracil: step 1/1. Allosterically activated by GTP. Catalyzes the conversion of uracil and 5-phospho-alpha-D-ribose 1-diphosphate (PRPP) to UMP and diphosphate. This chain is Uracil phosphoribosyltransferase 1, found in Schizosaccharomyces pombe (strain 972 / ATCC 24843) (Fission yeast).